The following is a 206-amino-acid chain: Small ribosomal subunit protein uS4 (206 aa).

The S4 RNA-binding domain maps to 96-156 (GRLDNVVYRM…EKAKKQSRVK (61 aa)).

This sequence belongs to the universal ribosomal protein uS4 family. In terms of assembly, part of the 30S ribosomal subunit. Contacts protein S5. The interaction surface between S4 and S5 is involved in control of translational fidelity.

One of the primary rRNA binding proteins, it binds directly to 16S rRNA where it nucleates assembly of the body of the 30S subunit. Its function is as follows. With S5 and S12 plays an important role in translational accuracy. The polypeptide is Small ribosomal subunit protein uS4 (Salmonella typhi).